The sequence spans 368 residues: Putative J domain-containing protein R445 (368 aa).

A J domain is found at 13 to 83 (DLYKILGLTN…KQRNEYNQRL (71 aa)).

This Acanthamoeba polyphaga mimivirus (APMV) protein is Putative J domain-containing protein R445.